The chain runs to 148 residues: Glutamyl-tRNA(Gln) amidotransferase subunit C, mitochondrial (148 aa).

The protein belongs to the GatC family. Subunit of the heterotrimeric GatCAB amidotransferase (AdT) complex, composed of A, B and C subunits.

Its subcellular location is the mitochondrion. It carries out the reaction L-glutamyl-tRNA(Gln) + L-glutamine + ATP + H2O = L-glutaminyl-tRNA(Gln) + L-glutamate + ADP + phosphate + H(+). Allows the formation of correctly charged Gln-tRNA(Gln) through the transamidation of misacylated Glu-tRNA(Gln) in the mitochondria. The reaction takes place in the presence of glutamine and ATP through an activated gamma-phospho-Glu-tRNA(Gln). The sequence is that of Glutamyl-tRNA(Gln) amidotransferase subunit C, mitochondrial from Drosophila pseudoobscura pseudoobscura (Fruit fly).